Here is a 559-residue protein sequence, read N- to C-terminus: MTKFVFVTGGVVSSLGKGIASASLAAILESRGLKVTLIKLDPYINVDPGTMSPFQHGEVFVTDDGAETDLDLGHYERFIETRMKKTNNFTTGRIYQSVLEKERRGDYLGKTVQVIPHVTNEIQEYVKRGAGIGTGDAVDVAIVEIGGTVGDIESLPFLEAVRQMSLRMGPNNSAFVHLTYLPYIAAAGELKTKPTQHTVQKLREIGIQPDALLCRADRRIPDEERGKISLFTNVAEWGVISMWDVDTIYKVPRMLHEQGLDGLICDKLRLNTPPTSLKRWDQLVYETEHPQGEVTIAMVGKYVDLSDSYKSVNEALRHAGMKNHVRVKIEHVDSETIAPGDAAEKLAKYDAILVPGGFGARGVEGKICTARYAREQRVPYLGICLGMQVATIEYARHVAGLANANSTEFDAATPHPVIALITEWKDADGTIQTRSETSDLGGTMRLGAQSSDVASGTLAHEIYGNIVTERHRHRYEANVNYLDRLRKAGLVISALTQREQLTEIVELPREVHPWFIGVQFHPEFKSTPWDGHPLFNAFIKAAIDHQKSRQPTLPAAAAS.

The amidoligase domain stretch occupies residues 1-270; the sequence is MTKFVFVTGG…DGLICDKLRL (270 aa). S13 is a binding site for CTP. Residue S13 coordinates UTP. ATP is bound by residues 14-19 and D71; that span reads SLGKGI. Mg(2+) is bound by residues D71 and E144. CTP is bound by residues 151-153, 191-196, and K227; these read DIE and KTKPTQ. Residues 191-196 and K227 contribute to the UTP site; that span reads KTKPTQ. The region spanning 295–548 is the Glutamine amidotransferase type-1 domain; that stretch reads TIAMVGKYVD…IKAAIDHQKS (254 aa). G357 is an L-glutamine binding site. C384 (nucleophile; for glutamine hydrolysis) is an active-site residue. L-glutamine contacts are provided by residues 385–388, E408, and R474; that span reads LGMQ. Active-site residues include H521 and E523.

This sequence belongs to the CTP synthase family. Homotetramer.

The enzyme catalyses UTP + L-glutamine + ATP + H2O = CTP + L-glutamate + ADP + phosphate + 2 H(+). It catalyses the reaction L-glutamine + H2O = L-glutamate + NH4(+). It carries out the reaction UTP + NH4(+) + ATP = CTP + ADP + phosphate + 2 H(+). It participates in pyrimidine metabolism; CTP biosynthesis via de novo pathway; CTP from UDP: step 2/2. With respect to regulation, allosterically activated by GTP, when glutamine is the substrate; GTP has no effect on the reaction when ammonia is the substrate. The allosteric effector GTP functions by stabilizing the protein conformation that binds the tetrahedral intermediate(s) formed during glutamine hydrolysis. Inhibited by the product CTP, via allosteric rather than competitive inhibition. Its function is as follows. Catalyzes the ATP-dependent amination of UTP to CTP with either L-glutamine or ammonia as the source of nitrogen. Regulates intracellular CTP levels through interactions with the four ribonucleotide triphosphates. The sequence is that of CTP synthase from Paracidovorax citrulli (strain AAC00-1) (Acidovorax citrulli).